We begin with the raw amino-acid sequence, 244 residues long: Lytic polysaccharide monooxygenase-like protein ANIA_04702 (244 aa).

A signal peptide spans 1–23 (MLMSTSPSPWLAAAMLCIGLANA). H24 is a Cu(2+) binding site. Residue H24 is modified to Methylhistidine. N-linked (GlcNAc...) asparagine glycans are attached at residues N57, N80, N118, N159, N192, and N198. 2 disulfide bridges follow: C72–C177 and C142–C196. N215 is lipidated: GPI-anchor amidated asparagine. Residues 216-244 (AGLEAVTVPSFLTAVVPTFLGIAYGLLMA) constitute a propeptide, removed in mature form.

The protein belongs to the X325 family. Cu(2+) is required as a cofactor. In terms of processing, the catalytically essential N-terminal histidine His-24 is post-translationally modified by methylation to prevent protonation of the histidine side chain, and protect the critical active site of the enzyme from oxidative damage.

It localises to the cell membrane. Lytic polysaccharide monooxygenase-like protein that has diverged to biological functions other than polysaccharide degradation since it does not perform oxidative cleavage of polysaccharides. Acts as a cell surface-bound protein that functions in the copper-accumulation pathway. May also act as the major cell wall sensor that regulates MAP kinase-dependent hyphal anastomosis, the fusion of hyphal cells. The protein is Lytic polysaccharide monooxygenase-like protein ANIA_04702 of Emericella nidulans (strain FGSC A4 / ATCC 38163 / CBS 112.46 / NRRL 194 / M139) (Aspergillus nidulans).